The following is a 71-amino-acid chain: UPF0435 protein BPUM_0734 (71 aa).

This sequence belongs to the UPF0435 family.

The chain is UPF0435 protein BPUM_0734 from Bacillus pumilus (strain SAFR-032).